Consider the following 256-residue polypeptide: EF-hand calcium-binding domain-containing protein 4A (256 aa).

Over residues 1 to 10 the composition is skewed to basic residues; that stretch reads MAHLGSRRRM. Residues 1-32 are disordered; that stretch reads MAHLGSRRRMSPGLRTRIAHRKAHRTPPSPLI. EF-hand domains are found at residues 41–69 and 71–106; these read KAHE…QNEL and LTPE…LLGV. Residues D84, S86, N88, Y90, and E95 each contribute to the Ca(2+) site. Positions 190-235 form a coiled coil; sequence IRDVHHEKDTLEQALKRKETDHGREVRCLYEEMEQQIKIERERLLK.

It belongs to the EFCAB4 family.

In Xenopus tropicalis (Western clawed frog), this protein is EF-hand calcium-binding domain-containing protein 4A (cracr2b).